Reading from the N-terminus, the 155-residue chain is Transcriptional repressor NrdR (155 aa).

Residues 1 to 24 form a disordered region; it reads MRCPYCGHEDSQVKDSRPTEDGAA. A zinc finger spans residues 3-34; sequence CPYCGHEDSQVKDSRPTEDGAAIRRRRQCEDC. Basic and acidic residues predominate over residues 7-24; it reads GHEDSQVKDSRPTEDGAA. The ATP-cone domain occupies 49 to 139; that stretch reads VVVIKAGGTR…VYRDFTEARD (91 aa).

It belongs to the NrdR family. The cofactor is Zn(2+).

Functionally, negatively regulates transcription of bacterial ribonucleotide reductase nrd genes and operons by binding to NrdR-boxes. In Sphingopyxis alaskensis (strain DSM 13593 / LMG 18877 / RB2256) (Sphingomonas alaskensis), this protein is Transcriptional repressor NrdR.